Here is a 125-residue protein sequence, read N- to C-terminus: MKKSEFKNSFIELLSNNIDNLNYDEKIHFIKKILTEYEIEKDKTDRTPVNKGQPWNDHQLELILSLPATKKNCLKFAKIFGRGYGSIEQIYRWASTPKNQLTKERLNDAFIQQIMRVKRNLELRN.

This is an uncharacterized protein from Pasteurella multocida (strain Pm70).